The following is a 126-amino-acid chain: Holo-[acyl-carrier-protein] synthase (126 aa).

The Mg(2+) site is built by D9 and E58.

It belongs to the P-Pant transferase superfamily. AcpS family. The cofactor is Mg(2+).

The protein localises to the cytoplasm. The catalysed reaction is apo-[ACP] + CoA = holo-[ACP] + adenosine 3',5'-bisphosphate + H(+). Transfers the 4'-phosphopantetheine moiety from coenzyme A to a Ser of acyl-carrier-protein. The protein is Holo-[acyl-carrier-protein] synthase of Pectobacterium atrosepticum (strain SCRI 1043 / ATCC BAA-672) (Erwinia carotovora subsp. atroseptica).